The following is a 317-amino-acid chain: Ret finger protein-like 3 (317 aa).

An RING-type zinc finger spans residues 40 to 82 (CPVCSDYLEKPMSLECGCTVCLKCINSLQKEPHGEDLLCCCCS). The B30.2/SPRY domain occupies 107-301 (EPKLKKILQM…DQGVLSICPL (195 aa)).

As to expression, expressed during neurogenesis in differentiating human embryonic stem cells and in the developing human neocortex.

It is found in the cytoplasm. It localises to the nucleus. (Microbial infection) Stimulates the activity of Human Immunodeficiency Virus 1/HIV-1 pre-integration complex. The sequence is that of Ret finger protein-like 3 (RFPL3) from Homo sapiens (Human).